A 297-amino-acid polypeptide reads, in one-letter code: tRNA pseudouridine synthase B (297 aa).

Catalysis depends on aspartate 39, which acts as the Nucleophile.

This sequence belongs to the pseudouridine synthase TruB family. Type 1 subfamily.

The enzyme catalyses uridine(55) in tRNA = pseudouridine(55) in tRNA. Functionally, responsible for synthesis of pseudouridine from uracil-55 in the psi GC loop of transfer RNAs. This is tRNA pseudouridine synthase B from Lactobacillus gasseri (strain ATCC 33323 / DSM 20243 / BCRC 14619 / CIP 102991 / JCM 1131 / KCTC 3163 / NCIMB 11718 / NCTC 13722 / AM63).